The following is a 329-amino-acid chain: Probable allantoicase (329 aa).

This sequence belongs to the allantoicase family.

The catalysed reaction is allantoate + H2O = (S)-ureidoglycolate + urea. Its pathway is nitrogen metabolism; (S)-allantoin degradation; (S)-ureidoglycolate from allantoate (aminidohydrolase route): step 1/1. The sequence is that of Probable allantoicase from Nocardia farcinica (strain IFM 10152).